The sequence spans 760 residues: GLC7-interacting protein 4 (760 aa).

Disordered regions lie at residues 449–573 (KKKP…SLQS) and 593–626 (KSASTPNPSASSSLAPSPKVSSINNTSSGKSSST). Low complexity-rich tracts occupy residues 454 to 474 (ITKLPASSSPSPSPTSSASPS) and 494 to 506 (SSRSPSVSPVRTT). Serine 497 and serine 501 each carry phosphoserine. Residues 512-525 (AETKKSVVSPEKRK) show a composition bias toward basic and acidic residues. Polar residues predominate over residues 534 to 554 (SSSLQSYTNKQQTSYLNSTRH). Low complexity-rich tracts occupy residues 561 to 573 (SKLNNQRSNSLQS) and 594 to 626 (SASTPNPSASSSLAPSPKVSSINNTSSGKSSST). Serine 609 carries the post-translational modification Phosphoserine.

The protein belongs to the GIP4 family. As to quaternary structure, interacts with GLC7.

It is found in the cytoplasm. Its function is as follows. GLC7 phosphatase-regulatory protein involved in GLC7 subcellular redistribution and chromosome segregation. This chain is GLC7-interacting protein 4 (GIP4), found in Saccharomyces cerevisiae (strain ATCC 204508 / S288c) (Baker's yeast).